We begin with the raw amino-acid sequence, 122 residues long: uncharacterized protein (122 aa).

Residues 10-120 enclose the HIT domain; that stretch reads VFARILRGEI…AGRRLGPMIT (111 aa). The Histidine triad motif signature appears at 104 to 108; that stretch reads HLHIH.

This is an uncharacterized protein from Azospirillum brasilense.